Consider the following 355-residue polypeptide: Neurogenic differentiation factor 1 (355 aa).

The tract at residues 1–93 (MTKSYSESGL…GPKKKKMTKA (93 aa)) is disordered. Residues 58–77 (DEEDEDEDLEEEDEEEEEDD) are compositionally biased toward acidic residues. The segment covering 80–92 (PKRRGPKKKKMTK) has biased composition (basic residues). The Nuclear localization signal motif lies at 86–92 (KKKKMTK). Residues 100-152 (LRRMKANARERNRMHGLNAALDNLRKVVPCYSKTQKLSKIETLRLAKNYIWAL) form the bHLH domain. Phosphoserine occurs at positions 161, 258, 265, and 273. S334 carries the phosphoserine; by CaMK2 modification.

In terms of assembly, efficient DNA-binding requires dimerization with another bHLH protein. Heterodimer with TCF3/E47; the heterodimer is inhibited in presence of ID2, but not NR0B2, to E-box element. Interacts with EP300; the interaction is inhibited by NR0B2. Interacts with RREB1. Interacts with ATOH8. In terms of processing, phosphorylated. In islet cells, phosphorylated on Ser-273 upon glucose stimulation; which may be required for nuclear localization. In activated neurons, phosphorylated on Ser-334; which promotes dendritic growth. Phosphorylated by MAPK1; phosphorylation regulates heterodimerization and DNA-binding activities. Phosphorylation on Ser-265 and Ser-273 increases transactivation on the insulin promoter in glucose-stimulated insulinoma cells. In terms of tissue distribution, most abundant in pancreatic alpha- and beta-cells, less in brain and intestine.

It localises to the cytoplasm. The protein localises to the nucleus. Functionally, acts as a transcriptional activator: mediates transcriptional activation by binding to E box-containing promoter consensus core sequences 5'-CANNTG-3'. Associates with the p300/CBP transcription coactivator complex to stimulate transcription of the secretin gene as well as the gene encoding the cyclin-dependent kinase inhibitor CDKN1A. Contributes to the regulation of several cell differentiation pathways, like those that promote the formation of early retinal ganglion cells, inner ear sensory neurons, granule cells forming either the cerebellum or the dentate gyrus cell layer of the hippocampus, endocrine islet cells of the pancreas and enteroendocrine cells of the small intestine. Together with PAX6 or SIX3, is required for the regulation of amacrine cell fate specification. Also required for dendrite morphogenesis and maintenance in the cerebellar cortex. Associates with chromatin to enhancer regulatory elements in genes encoding key transcriptional regulators of neurogenesis. The sequence is that of Neurogenic differentiation factor 1 (NEUROD1) from Mesocricetus auratus (Golden hamster).